The chain runs to 312 residues: DNA-directed RNA polymerase subunit alpha (312 aa).

The segment at 1–226 is alpha N-terminal domain (alpha-NTD); that stretch reads MIEFEKPKIT…DHLNLFVDLS (226 aa). An alpha C-terminal domain (alpha-CTD) region spans residues 243 to 312; it reads TERVLDKIIE…ELGLSLKKRK (70 aa).

It belongs to the RNA polymerase alpha chain family. As to quaternary structure, homodimer. The RNAP catalytic core consists of 2 alpha, 1 beta, 1 beta' and 1 omega subunit. When a sigma factor is associated with the core the holoenzyme is formed, which can initiate transcription.

The catalysed reaction is RNA(n) + a ribonucleoside 5'-triphosphate = RNA(n+1) + diphosphate. Functionally, DNA-dependent RNA polymerase catalyzes the transcription of DNA into RNA using the four ribonucleoside triphosphates as substrates. The polypeptide is DNA-directed RNA polymerase subunit alpha (Lactococcus lactis subsp. lactis (strain IL1403) (Streptococcus lactis)).